The following is a 143-amino-acid chain: S-protein homolog 11 (143 aa).

The first 20 residues, 1 to 20 (MNCFSFSFIIIVLCAGSSNA), serve as a signal peptide directing secretion.

The protein belongs to the plant self-incompatibility (S1) protein family.

The protein resides in the secreted. The polypeptide is S-protein homolog 11 (Arabidopsis thaliana (Mouse-ear cress)).